The primary structure comprises 252 residues: Probable transcriptional regulatory protein CE1776 (252 aa).

Residues 1–22 are disordered; sequence MAGHSKWATTKHKKAANDAKRG.

The protein belongs to the TACO1 family.

It localises to the cytoplasm. This is Probable transcriptional regulatory protein CE1776 from Corynebacterium efficiens (strain DSM 44549 / YS-314 / AJ 12310 / JCM 11189 / NBRC 100395).